The sequence spans 392 residues: Succinate--CoA ligase [ADP-forming] subunit beta (392 aa).

The region spanning 9 to 236 (RDLFERHGLP…QAAVDPLEQA (228 aa)) is the ATP-grasp domain. Residues Lys-45, 52 to 54 (GRG), Ala-94, and Glu-99 each bind ATP. Mg(2+) is bound by residues Asn-191 and Asp-205. Residues Asn-256 and 318–320 (GIT) contribute to the substrate site.

This sequence belongs to the succinate/malate CoA ligase beta subunit family. As to quaternary structure, heterotetramer of two alpha and two beta subunits. Mg(2+) is required as a cofactor.

The catalysed reaction is succinate + ATP + CoA = succinyl-CoA + ADP + phosphate. The enzyme catalyses GTP + succinate + CoA = succinyl-CoA + GDP + phosphate. The protein operates within carbohydrate metabolism; tricarboxylic acid cycle; succinate from succinyl-CoA (ligase route): step 1/1. Succinyl-CoA synthetase functions in the citric acid cycle (TCA), coupling the hydrolysis of succinyl-CoA to the synthesis of either ATP or GTP and thus represents the only step of substrate-level phosphorylation in the TCA. The beta subunit provides nucleotide specificity of the enzyme and binds the substrate succinate, while the binding sites for coenzyme A and phosphate are found in the alpha subunit. The protein is Succinate--CoA ligase [ADP-forming] subunit beta of Salinispora tropica (strain ATCC BAA-916 / DSM 44818 / JCM 13857 / NBRC 105044 / CNB-440).